A 144-amino-acid chain; its full sequence is MPPKKKKVTGLIKLQINAGAANPAPPVGPALGQHGVNIMEFCKAYNAATESQRGMVVPVEITVYEDRSFTFVTKTPPAAKLILKAAGVDKGSGEPHKTKVAKLTAAQVREIATTKLPDLNANDLDAASKIIAGTARSMGITVEG.

The protein belongs to the universal ribosomal protein uL11 family. Part of the ribosomal stalk of the 50S ribosomal subunit. Interacts with L10 and the large rRNA to form the base of the stalk. L10 forms an elongated spine to which L12 dimers bind in a sequential fashion forming a multimeric L10(L12)X complex. Post-translationally, one or more lysine residues are methylated.

In terms of biological role, forms part of the ribosomal stalk which helps the ribosome interact with GTP-bound translation factors. This chain is Large ribosomal subunit protein uL11, found in Streptomyces griseus subsp. griseus (strain JCM 4626 / CBS 651.72 / NBRC 13350 / KCC S-0626 / ISP 5235).